Here is a 669-residue protein sequence, read N- to C-terminus: DNA ligase (669 aa).

NAD(+) is bound by residues 34-38 (DAEYD), 83-84 (SL), and E114. Catalysis depends on K116, which acts as the N6-AMP-lysine intermediate. Residues R137, E171, K287, and K311 each contribute to the NAD(+) site. Positions 405, 408, 423, and 428 each coordinate Zn(2+). Residues 591–669 (NIASYFAGKT…EERFLQELNK (79 aa)) enclose the BRCT domain.

It belongs to the NAD-dependent DNA ligase family. LigA subfamily. Mg(2+) is required as a cofactor. It depends on Mn(2+) as a cofactor.

It catalyses the reaction NAD(+) + (deoxyribonucleotide)n-3'-hydroxyl + 5'-phospho-(deoxyribonucleotide)m = (deoxyribonucleotide)n+m + AMP + beta-nicotinamide D-nucleotide.. Its function is as follows. DNA ligase that catalyzes the formation of phosphodiester linkages between 5'-phosphoryl and 3'-hydroxyl groups in double-stranded DNA using NAD as a coenzyme and as the energy source for the reaction. It is essential for DNA replication and repair of damaged DNA. This is DNA ligase from Bacillus cytotoxicus (strain DSM 22905 / CIP 110041 / 391-98 / NVH 391-98).